A 653-amino-acid polypeptide reads, in one-letter code: tRNA-guanine(15) transglycosylase (653 aa).

Catalysis depends on Asp-91, which acts as the Nucleophile. The substrate site is built by Asp-126 and Ala-193. Zn(2+) is bound by residues Cys-276, Cys-278, and Cys-281. The 76-residue stretch at 578–653 (AWRVAVNEES…QAVKTRKGGF (76 aa)) folds into the PUA domain.

Belongs to the archaeosine tRNA-ribosyltransferase family. Zn(2+) is required as a cofactor.

It catalyses the reaction guanosine(15) in tRNA + 7-cyano-7-deazaguanine = 7-cyano-7-carbaguanosine(15) in tRNA + guanine. The protein operates within tRNA modification; archaeosine-tRNA biosynthesis. Its function is as follows. Exchanges the guanine residue with 7-cyano-7-deazaguanine (preQ0) at position 15 in the dihydrouridine loop (D-loop) of archaeal tRNAs. The sequence is that of tRNA-guanine(15) transglycosylase from Methanothermobacter thermautotrophicus (strain ATCC 29096 / DSM 1053 / JCM 10044 / NBRC 100330 / Delta H) (Methanobacterium thermoautotrophicum).